A 401-amino-acid polypeptide reads, in one-letter code: cAMP-dependent protein kinase type II-alpha regulatory subunit (401 aa).

At Ser2 the chain carries N-acetylserine. A dimerization and phosphorylation region spans residues 2 to 135 (SHIQIPPGLT…RLQEACKDIL (134 aa)). The segment at 43-65 (ARSRASTPPAAPPSGSQDFDPGA) is disordered. Low complexity predominate over residues 46-58 (RASTPPAAPPSGS). Ser48, Ser75, and Ser77 each carry phosphoserine. Ser96 carries the phosphoserine; by PKA modification. 3',5'-cyclic AMP contacts are provided by residues 136–257 (LFKN…ESVP), Glu205, Arg214, 258–401 (LLKS…DPGQ), Glu335, and Arg344. Residue Thr212 is modified to Phosphothreonine; by PDPK1. Ser347 and Ser392 each carry phosphoserine.

This sequence belongs to the cAMP-dependent kinase regulatory chain family. The inactive form of the enzyme is composed of two regulatory chains and two catalytic chains. Activation by cAMP produces two active catalytic monomers and a regulatory dimer that binds four cAMP molecules. Interacts with AKAP4 and CBFA2T3. Interacts with the phosphorylated form of PJA2. Interacts with MYRIP; this interaction may link PKA to components of the exocytosis machinery, thus facilitating exocytosis, including insulin release. Forms a complex composed of PRKAR2A, GSK3B and GSKIP through GSKIP interaction; facilitates PKA-induced phosphorylation and regulates GSK3B activity. Interacts with ADCY8; inhibits adenylate cyclase activity through PKA phosphorylation. A second phosphorylation site has not been located. Post-translationally, phosphorylation of Thr-212 by PDPK1 seems to attenuate the activity of PKA, perhaps by strengthening interaction between the regulatory and the catalytic subunits. As to expression, four types of regulatory chains are found: I-alpha, I-beta, II-alpha, and II-beta. Their expression varies among tissues and is in some cases constitutive and in others inducible.

It is found in the cytoplasm. The protein localises to the cell membrane. Regulatory subunit of the cAMP-dependent protein kinases involved in cAMP signaling in cells. Type II regulatory chains mediate membrane association by binding to anchoring proteins, including the MAP2 kinase. The chain is cAMP-dependent protein kinase type II-alpha regulatory subunit (PRKAR2A) from Bos taurus (Bovine).